Here is a 346-residue protein sequence, read N- to C-terminus: [LysW]-lysine/[LysW]-ornithine hydrolase (346 aa).

Position 68 (His68) interacts with Zn(2+). Asp70 is an active-site residue. Asp92 contributes to the Zn(2+) binding site. Glu122 functions as the Proton acceptor in the catalytic mechanism. Residues Glu123, Glu146, and His317 each coordinate Zn(2+).

The protein belongs to the peptidase M20A family. LysK subfamily. Requires Zn(2+) as cofactor. Co(2+) is required as a cofactor.

The protein localises to the cytoplasm. It catalyses the reaction [amino-group carrier protein]-C-terminal-gamma-(L-lysyl)-L-glutamate + H2O = [amino-group carrier protein]-C-terminal-L-glutamate + L-lysine. It carries out the reaction [amino-group carrier protein]-C-terminal-gamma-(L-ornithyl)-L-glutamate + H2O = [amino-group carrier protein]-C-terminal-L-glutamate + L-ornithine. It functions in the pathway amino-acid biosynthesis; L-lysine biosynthesis via AAA pathway; L-lysine from L-alpha-aminoadipate (Thermus route): step 5/5. It participates in amino-acid biosynthesis; L-arginine biosynthesis. Its function is as follows. Catalyzes the release of L-lysine from [LysW]-gamma-L-lysine and the release of L-ornithine from [LysW]-L-ornithine. This is [LysW]-lysine/[LysW]-ornithine hydrolase from Saccharolobus islandicus (strain Y.N.15.51 / Yellowstone #2) (Sulfolobus islandicus).